Reading from the N-terminus, the 477-residue chain is Proline--tRNA ligase (477 aa).

Belongs to the class-II aminoacyl-tRNA synthetase family. ProS type 3 subfamily. In terms of assembly, homodimer.

The protein resides in the cytoplasm. The enzyme catalyses tRNA(Pro) + L-proline + ATP = L-prolyl-tRNA(Pro) + AMP + diphosphate. Its function is as follows. Catalyzes the attachment of proline to tRNA(Pro) in a two-step reaction: proline is first activated by ATP to form Pro-AMP and then transferred to the acceptor end of tRNA(Pro). This is Proline--tRNA ligase from Methanocorpusculum labreanum (strain ATCC 43576 / DSM 4855 / Z).